The following is a 73-amino-acid chain: RNA-binding protein Hfq (73 aa).

One can recognise a Sm domain in the interval 8–68 (DQFLNQIRKE…ISTFAPQKNV (61 aa)).

This sequence belongs to the Hfq family. Homohexamer.

RNA chaperone that binds small regulatory RNA (sRNAs) and mRNAs to facilitate mRNA translational regulation in response to envelope stress, environmental stress and changes in metabolite concentrations. Also binds with high specificity to tRNAs. The chain is RNA-binding protein Hfq from Bacillus licheniformis (strain ATCC 14580 / DSM 13 / JCM 2505 / CCUG 7422 / NBRC 12200 / NCIMB 9375 / NCTC 10341 / NRRL NRS-1264 / Gibson 46).